A 325-amino-acid chain; its full sequence is MSETTSWQPSASVANLLKRASIIAAIRRFFTDRGVLEVETPAMSQATVTDIFLYPFQTRFVGPGAADGMTMYLMTSPEYHMKRLLAAGSGPIFQLCRSFRNEESGRHHNPEFTMLEWYRPHYDMYRLMNEVDDLLQQVLDCESAEMLSYQQAFLRHLELDPLSVDKAQLREAAEKLGLGDIACREDDRDSLVQMLFTFGVEPHIGRDKPAFVYHFPATQASLAEISSEDHRVAERFEVYFKGIELANGFRELTDADEQRQRFEQDNRKRAARDLPQQPIDENLLAALKHGLPECAGVALGVDRLIMLALNAEKLSDVIAFSVERA.

76–78 (SPE) is a substrate binding site. ATP is bound by residues 100–102 (RNE) and Asn-109. Tyr-118 contacts substrate. ATP is bound at residue 244–245 (EL). A substrate-binding site is contributed by Glu-251. Position 300 (Gly-300) interacts with ATP.

Belongs to the class-II aminoacyl-tRNA synthetase family. EpmA subfamily. In terms of assembly, homodimer.

The enzyme catalyses D-beta-lysine + L-lysyl-[protein] + ATP = N(6)-((3R)-3,6-diaminohexanoyl)-L-lysyl-[protein] + AMP + diphosphate + H(+). In terms of biological role, with EpmB is involved in the beta-lysylation step of the post-translational modification of translation elongation factor P (EF-P). Catalyzes the ATP-dependent activation of (R)-beta-lysine produced by EpmB, forming a lysyl-adenylate, from which the beta-lysyl moiety is then transferred to the epsilon-amino group of a conserved specific lysine residue in EF-P. This chain is Elongation factor P--(R)-beta-lysine ligase, found in Pectobacterium carotovorum subsp. carotovorum (strain PC1).